A 926-amino-acid chain; its full sequence is Ubiquitin carboxyl-terminal hydrolase 4 (926 aa).

A Rhodanese domain is found at 205-328; the sequence is SQMEILLIDI…WLKSNYGSQV (124 aa). Position 443 is a phosphoserine (Ser-443). Residues 562 to 923 form the USP domain; sequence VGLENLGNSC…NAYVLFYHRV (362 aa). Residue Cys-571 is the Nucleophile of the active site. Catalysis depends on His-880, which acts as the Proton acceptor.

It belongs to the peptidase C19 family. As to quaternary structure, interacts with BRO1, RFU1 and VPS32. Associates with the 26S proteasome.

The protein resides in the cytoplasm. Its subcellular location is the late endosome membrane. The enzyme catalyses Thiol-dependent hydrolysis of ester, thioester, amide, peptide and isopeptide bonds formed by the C-terminal Gly of ubiquitin (a 76-residue protein attached to proteins as an intracellular targeting signal).. RFU1 is an inhibitor of deubiquitination activity. In terms of biological role, ubiquitin thioesterase that acts at the late endosome/prevacuolar compartment to recover ubiquitin from ubiquitinated membrane proteins en route to the vacuole. Also removes ubiquitin from soluble proteins targeted to proteasomes. Is essential to maintain a normal level of free ubiquitin. Involved in the ammonium-induced down-regulation of the GAP1 permease and the UME3 destruction in response to oxidative stress. Has a role in the RAD9 checkpoint response to TOP1 poisons. Required for promoting coordination of DNA replication and avoids DNA overreplication. The polypeptide is Ubiquitin carboxyl-terminal hydrolase 4 (DOA4) (Saccharomyces cerevisiae (strain YJM789) (Baker's yeast)).